A 163-amino-acid chain; its full sequence is 6,7-dimethyl-8-ribityllumazine synthase (163 aa).

5-amino-6-(D-ribitylamino)uracil is bound by residues Phe27, 58–60 (ALE), and 87–89 (CVI). 92 to 93 (DT) contacts (2S)-2-hydroxy-3-oxobutyl phosphate. The Proton donor role is filled by His95. Position 120 (Asn120) interacts with 5-amino-6-(D-ribitylamino)uracil. Arg134 contacts (2S)-2-hydroxy-3-oxobutyl phosphate.

It belongs to the DMRL synthase family.

It carries out the reaction (2S)-2-hydroxy-3-oxobutyl phosphate + 5-amino-6-(D-ribitylamino)uracil = 6,7-dimethyl-8-(1-D-ribityl)lumazine + phosphate + 2 H2O + H(+). The protein operates within cofactor biosynthesis; riboflavin biosynthesis; riboflavin from 2-hydroxy-3-oxobutyl phosphate and 5-amino-6-(D-ribitylamino)uracil: step 1/2. Catalyzes the formation of 6,7-dimethyl-8-ribityllumazine by condensation of 5-amino-6-(D-ribitylamino)uracil with 3,4-dihydroxy-2-butanone 4-phosphate. This is the penultimate step in the biosynthesis of riboflavin. This Afipia carboxidovorans (strain ATCC 49405 / DSM 1227 / KCTC 32145 / OM5) (Oligotropha carboxidovorans) protein is 6,7-dimethyl-8-ribityllumazine synthase.